The chain runs to 324 residues: tRNA uridine(34) hydroxylase (324 aa).

Residues 127–221 (QQEETIVIDA…YGKDPEVQGE (95 aa)) enclose the Rhodanese domain. The Cysteine persulfide intermediate role is filled by Cys-181.

It belongs to the TrhO family.

It carries out the reaction uridine(34) in tRNA + AH2 + O2 = 5-hydroxyuridine(34) in tRNA + A + H2O. In terms of biological role, catalyzes oxygen-dependent 5-hydroxyuridine (ho5U) modification at position 34 in tRNAs. This Bacillus cytotoxicus (strain DSM 22905 / CIP 110041 / 391-98 / NVH 391-98) protein is tRNA uridine(34) hydroxylase.